We begin with the raw amino-acid sequence, 219 residues long: Abasic site processing protein YobE (219 aa).

Cys2 acts as the Nucleophile in catalysis. Thiazolidine linkage to a ring-opened DNA abasic site is present on Cys2. Residue Glu106 is part of the active site.

Belongs to the SOS response-associated peptidase family.

With respect to regulation, formation and reversal of DNA-protein cross-link depends on DNA context. Catalyzes formation of the thiazolidine linkage in presence of abasic sites in single-stranded DNA. Mediates the reversal of the thiazolidine cross-link in presence of double stranded DNA. Its function is as follows. Sensor of abasic sites in single-stranded DNA (ssDNA) required to preserve genome integrity by promoting error-free repair of abasic sites. Recognizes and binds abasic sites in ssDNA at replication forks and chemically modifies the lesion by forming a covalent cross-link with DNA: forms a stable thiazolidine linkage between a ring-opened abasic site and the alpha-amino and sulfhydryl substituents of its N-terminal catalytic cysteine residue. The DNA-protein cross-link is then reversed: able to catalyze the reversal of the thiazolidine cross-link and cycle between a cross-link and a non-cross-linked state depending on DNA context: mediates self-reversal of the thiazolidine cross-link in double stranded DNA. May act as a protease: mediates autocatalytic processing of its N-terminal methionine in order to expose the catalytic cysteine. The polypeptide is Abasic site processing protein YobE (yobE) (Bacillus subtilis (strain 168)).